The primary structure comprises 417 residues: Tryptophan synthase beta chain (417 aa).

An N6-(pyridoxal phosphate)lysine modification is found at Lys110.

The protein belongs to the TrpB family. As to quaternary structure, tetramer of two alpha and two beta chains. Pyridoxal 5'-phosphate serves as cofactor.

It carries out the reaction (1S,2R)-1-C-(indol-3-yl)glycerol 3-phosphate + L-serine = D-glyceraldehyde 3-phosphate + L-tryptophan + H2O. It functions in the pathway amino-acid biosynthesis; L-tryptophan biosynthesis; L-tryptophan from chorismate: step 5/5. The beta subunit is responsible for the synthesis of L-tryptophan from indole and L-serine. The chain is Tryptophan synthase beta chain from Prochlorococcus marinus (strain NATL1A).